Reading from the N-terminus, the 334-residue chain is TPR repeat-containing protein MJ0798 (334 aa).

TPR repeat units lie at residues 102–135 (WKLW…NQNT), 137–168 (LLCK…DRNN), 169–202 (YKAL…NPND), 204–235 (EALE…KPDD), 236–269 (IDLI…NPNV), 273–306 (EQIY…NLYH), and 308–333 (EIYE…YKKL).

This is TPR repeat-containing protein MJ0798 from Methanocaldococcus jannaschii (strain ATCC 43067 / DSM 2661 / JAL-1 / JCM 10045 / NBRC 100440) (Methanococcus jannaschii).